Reading from the N-terminus, the 414-residue chain is Particulate methane monooxygenase alpha subunit (414 aa).

The N-terminal stretch at 1–32 (MKTIKDRIAKWSAIGLLSAVAATAFYAPSASA) is a signal peptide. The Cu cation site is built by H33, H48, H72, H137, and H139. The tract at residues 33–172 (HGEKSQAAFM…MSEFRNPVTT (140 aa)) is cupredoxin domain used to construct soluble pmoB (spmoB). 2 helical membrane passes run 186-206 (GNTY…IGYW) and 235-255 (VAMG…SSAN). The cupredoxin domain used to construct soluble pmoB (spmoB) stretch occupies residues 265–414 (QAGTMRGMKP…IDAPLIPSFM (150 aa)).

As to quaternary structure, m.capsulatus has two forms of methane monooxygenase, a soluble (sMMO) and a membrane-bound (particulate) type (pMMO). The particulate type is a nonamer composed of three alpha:beta:gamma heterotrimeric protomers assembled into a cylindrical structure; the beta and gamma subunits comprise the bulk of the membrane-spanning regions and the soluble regions are derived primarily from alpha subunits which form two antiparallel beta-barrel-like structures each. This assembly, also called pMMO hydroxylase (pMMO-H), is proposed to associate with methanol dehydrogenase (MDH), also designated as pMMO-R, to form the pMMO-C complex which seems to have greater methane monooxygenase activity. Requires Cu(2+) as cofactor.

Its subcellular location is the membrane. It catalyses the reaction methane + a quinol + O2 = methanol + a quinone + H2O. Functionally, methane monooxygenase is responsible for the initial oxygenation of methane to methanol in methanotrophs. At least in vitro, specific quinols can replace NADH as reductants. In Methylococcus capsulatus (strain ATCC 33009 / NCIMB 11132 / Bath), this protein is Particulate methane monooxygenase alpha subunit (pmoB1).